Here is a 37-residue protein sequence, read N- to C-terminus: Alpha-conotoxin LvIA (37 aa).

The propeptide occupies 1-20 (FRGRDAAAKASGLVGLTDRR). Cystine bridges form between Cys22–Cys28 and Cys23–Cys36. Residues 24–26 (SHP) form a ser-Xaa-Pro motif, crucial for potent interaction with nAChR region. Cys36 is subject to Cysteine amide.

It belongs to the conotoxin A superfamily. As to expression, expressed by the venom duct.

It is found in the secreted. Functionally, alpha-conotoxins act on postsynaptic membranes, they bind to the nicotinic acetylcholine receptors (nAChR) and thus inhibit them. This toxin blocks alpha-3-beta-2/CHRNA3-CHRNB2 nAChR with high selectivity (IC(50)=8.67 nM (on rat) and 17.5 (on human)). Also has weaker activity on alpha-6/alpha-3-beta-2-beta-3 (CHRNA6/CHRNA3-CHRNB2-CHRNB3) (IC(50)=108 nM (on rat)), alpha-6/alpha-3-beta-4 (CHRNA6/CHRNA3-CHRNB4) (IC(50)=121 nM (on rat)), alpha-3-beta-4 (CHRNA3-CHRNB4) (IC(50)=148 nM (on rat)), and alpha-7/CHRNA7 nAChRs (IC(50)=3000 nM (on rat)). When tested on mouse with hot-plate tests, this toxin significantly increases the base pain threshold and shows analgesic effects. This Conus lividus (Livid cone) protein is Alpha-conotoxin LvIA.